Reading from the N-terminus, the 400-residue chain is S-adenosylmethionine synthase (400 aa).

Gly136–Asp141 serves as a coordination point for ATP.

Belongs to the AdoMet synthase 2 family. Mg(2+) is required as a cofactor.

The enzyme catalyses L-methionine + ATP + H2O = S-adenosyl-L-methionine + phosphate + diphosphate. It functions in the pathway amino-acid biosynthesis; S-adenosyl-L-methionine biosynthesis; S-adenosyl-L-methionine from L-methionine: step 1/1. In terms of biological role, catalyzes the formation of S-adenosylmethionine from methionine and ATP. This Thermoplasma acidophilum (strain ATCC 25905 / DSM 1728 / JCM 9062 / NBRC 15155 / AMRC-C165) protein is S-adenosylmethionine synthase (mat).